A 365-amino-acid chain; its full sequence is Phospho-N-acetylmuramoyl-pentapeptide-transferase (365 aa).

The next 10 membrane-spanning stretches (helical) occupy residues 2 to 22 (ISLIIGIMVSLVVTIVGTPLL), 51 to 71 (TLGGVVINLAVVLGWCSSALY), 80 to 100 (PSWSAVLVLFAMLSMGFLGFI), 118 to 138 (GKFIGQFILATIYAVLALILP), 167 to 187 (VAIVLFVIWVNFLMTAWTNAI), 196 to 216 (LAAGSSMIAFIGYAIIAFWEF), 234 to 254 (PLDLTIIAACAAVACFGFLWY), 256 to 276 (SNPASIFMGDTGSLALGGLFA), 277 to 297 (AMSIATHTEFLAIILGGLFVI), and 340 to 360 (FWMIEMLFVLIALVLFYGDWV).

This sequence belongs to the glycosyltransferase 4 family. MraY subfamily. The cofactor is Mg(2+).

It is found in the cell membrane. It carries out the reaction UDP-N-acetyl-alpha-D-muramoyl-L-alanyl-gamma-D-glutamyl-meso-2,6-diaminopimeloyl-D-alanyl-D-alanine + di-trans,octa-cis-undecaprenyl phosphate = di-trans,octa-cis-undecaprenyl diphospho-N-acetyl-alpha-D-muramoyl-L-alanyl-D-glutamyl-meso-2,6-diaminopimeloyl-D-alanyl-D-alanine + UMP. It functions in the pathway cell wall biogenesis; peptidoglycan biosynthesis. Its function is as follows. Catalyzes the initial step of the lipid cycle reactions in the biosynthesis of the cell wall peptidoglycan: transfers peptidoglycan precursor phospho-MurNAc-pentapeptide from UDP-MurNAc-pentapeptide onto the lipid carrier undecaprenyl phosphate, yielding undecaprenyl-pyrophosphoryl-MurNAc-pentapeptide, known as lipid I. In Bifidobacterium adolescentis (strain ATCC 15703 / DSM 20083 / NCTC 11814 / E194a), this protein is Phospho-N-acetylmuramoyl-pentapeptide-transferase.